A 334-amino-acid chain; its full sequence is Cytoskeleton protein RodZ (334 aa).

Residues 1-111 lie on the Cytoplasmic side of the membrane; it reads MNTEATHDQN…LGKRRKKRDG (111 aa). Positions 19–71 constitute an HTH cro/C1-type domain; it reads LRNAREQLGLSQQAVAERLCLKVSTVRDIEEDKAPSDLASTFLRGYIRSYARL. The segment at residues 30 to 49 is a DNA-binding region (H-T-H motif); it reads QQAVAERLCLKVSTVRDIEE. A helical; Signal-anchor for type II membrane protein transmembrane segment spans residues 112 to 132; sequence WLMSFTWLVLFVVVGLTGAWW. The Periplasmic segment spans residues 133–334; that stretch reads WQNHKAQQEE…TLNAEPTPAQ (202 aa). A disordered region spans residues 154-241; sequence LNADKDSGQS…PSALPTSQAG (88 aa). Composition is skewed to low complexity over residues 176–211 and 219–241; these read TTPAQTAPAPATPVDSTAATQTPAPTAAATQNTVVA and TAATSAAPAATETPSALPTSQAG.

It belongs to the RodZ family.

It is found in the cell inner membrane. Its function is as follows. Cytoskeletal protein that is involved in cell-shape control through regulation of the length of the long axis. This is Cytoskeleton protein RodZ from Salmonella choleraesuis (strain SC-B67).